The following is a 70-amino-acid chain: Turripeptide Gsg9.2 (70 aa).

Positions 1–20 (MKVYCLLLVLLVGLVSQAHG) are cleaved as a signal peptide. The Kazal-like domain occupies 21–70 (QLDKKCQMVCTMDYRPVCGSDGRTYPNKCTLTSTACMSQRSITVFHDGEC). Cystine bridges form between Cys-26–Cys-56, Cys-30–Cys-49, and Cys-38–Cys-70.

It belongs to the conopeptide P-like superfamily. In terms of tissue distribution, expressed by the venom duct.

The protein localises to the secreted. In terms of biological role, acts as a neurotoxin by inhibiting an ion channel. May also act as a serine protease inhibitor, since it possess the kazal serine protease inhibitor signature. The sequence is that of Turripeptide Gsg9.2 from Gemmula sogodensis (Gem-turris).